Consider the following 97-residue polypeptide: DNA/RNA-binding protein Alba (97 aa).

An N6-acetyllysine modification is found at Lys15.

It belongs to the histone-like Alba family. Acetylated. Acetylation at Lys-15 decreases DNA-binding affinity.

It localises to the cytoplasm. The protein localises to the chromosome. In terms of biological role, binds double-stranded DNA tightly but without sequence specificity. Involved in DNA compaction. This chain is DNA/RNA-binding protein Alba, found in Sulfolobus acidocaldarius (strain ATCC 33909 / DSM 639 / JCM 8929 / NBRC 15157 / NCIMB 11770).